A 217-amino-acid chain; its full sequence is uncharacterized protein (217 aa).

Residues 1 to 24 (MRYTVLIALQGALLLLLLIDDGQG) form the signal peptide.

This is an uncharacterized protein from Aedes vexans (Inland floodwater mosquito).